We begin with the raw amino-acid sequence, 820 residues long: TORTIFOLIA1-like protein 2 (820 aa).

HEAT repeat units follow at residues 61–98, 102–139, 146–183, 187–224, and 228–265; these read DKVS…FHEG, PYLG…KMSC, GVFV…SSPE, AIIQ…AGGA, and SVLS…TGEK. Residues 304–321 are compositionally biased toward low complexity; the sequence is PGSDSPEPSETESSVKES. Disordered stretches follow at residues 304–325, 357–377, and 584–644; these read PGSD…YNGA, PVSA…SNQD, and GSTI…GKTG. The span at 367-377 shows a compositional bias: basic and acidic residues; sequence YNDDPRKSNQD. The segment covering 584-613 has biased composition (polar residues); that stretch reads GSTISPRLSSCTSRTSTDIRNRQSTLSTSK.

This chain is TORTIFOLIA1-like protein 2, found in Arabidopsis thaliana (Mouse-ear cress).